The primary structure comprises 227 residues: DNA repair protein RecO (227 aa).

Belongs to the RecO family.

Its function is as follows. Involved in DNA repair and RecF pathway recombination. The chain is DNA repair protein RecO from Pseudomonas entomophila (strain L48).